The chain runs to 293 residues: MNDYLIKAINASKDLRLLTINGKDLVAEAQKRHDTWSASSAVLGRSLLGTLLLAGAELKGDQELTLRLLGDGPVGAAVVTAKSDLTVKGYVQNNHVALPAREDGHIDVKKAVGKGWLQVTKDLGLKQPYTGEVPIVSGEIAEDLTYYLAKSEQIPSAVGLSVFVNPNDTIGAAGGFLLQALPGASEELLQETEDRIKALPQLSSAFLDGMTPEDLAKKILGDDSKILEKDEVSYHCDCSKEKYAGMLETLKGSQLKEMIDEDHGAELVCNFCGNKYNFTEAELQAILDKKLGK.

Disulfide bonds link Cys236-Cys238 and Cys269-Cys272.

It belongs to the HSP33 family. Under oxidizing conditions two disulfide bonds are formed involving the reactive cysteines. Under reducing conditions zinc is bound to the reactive cysteines and the protein is inactive.

The protein localises to the cytoplasm. Functionally, redox regulated molecular chaperone. Protects both thermally unfolding and oxidatively damaged proteins from irreversible aggregation. Plays an important role in the bacterial defense system toward oxidative stress. The chain is 33 kDa chaperonin from Lactobacillus delbrueckii subsp. bulgaricus (strain ATCC BAA-365 / Lb-18).